Consider the following 408-residue polypeptide: Acetylornithine/succinyldiaminopimelate aminotransferase (408 aa).

Pyridoxal 5'-phosphate contacts are provided by residues 108–109 (GA) and phenylalanine 141. Arginine 144 is a binding site for N(2)-acetyl-L-ornithine. Residue 226–229 (DEIQ) participates in pyridoxal 5'-phosphate binding. Lysine 255 bears the N6-(pyridoxal phosphate)lysine mark. Threonine 283 serves as a coordination point for N(2)-acetyl-L-ornithine. Pyridoxal 5'-phosphate is bound at residue threonine 284.

Belongs to the class-III pyridoxal-phosphate-dependent aminotransferase family. ArgD subfamily. As to quaternary structure, homodimer. The cofactor is pyridoxal 5'-phosphate.

It is found in the cytoplasm. It catalyses the reaction N(2)-acetyl-L-ornithine + 2-oxoglutarate = N-acetyl-L-glutamate 5-semialdehyde + L-glutamate. The enzyme catalyses N-succinyl-(2S,6S)-2,6-diaminopimelate + 2-oxoglutarate = (S)-2-succinylamino-6-oxoheptanedioate + L-glutamate. It participates in amino-acid biosynthesis; L-arginine biosynthesis; N(2)-acetyl-L-ornithine from L-glutamate: step 4/4. It functions in the pathway amino-acid biosynthesis; L-lysine biosynthesis via DAP pathway; LL-2,6-diaminopimelate from (S)-tetrahydrodipicolinate (succinylase route): step 2/3. Its function is as follows. Involved in both the arginine and lysine biosynthetic pathways. In Buchnera aphidicola subsp. Acyrthosiphon pisum (strain APS) (Acyrthosiphon pisum symbiotic bacterium), this protein is Acetylornithine/succinyldiaminopimelate aminotransferase.